A 440-amino-acid chain; its full sequence is Xaa-Pro dipeptidase (440 aa).

Residues aspartate 244, aspartate 255, histidine 335, glutamate 380, and glutamate 419 each coordinate Mn(2+).

It belongs to the peptidase M24B family. Bacterial-type prolidase subfamily. Mn(2+) serves as cofactor.

It carries out the reaction Xaa-L-Pro dipeptide + H2O = an L-alpha-amino acid + L-proline. Splits dipeptides with a prolyl residue in the C-terminal position. This is Xaa-Pro dipeptidase from Shewanella baltica (strain OS195).